A 276-amino-acid chain; its full sequence is MATYFVGDIQGCNDELQQLLALAQFNPQHDELWLTGDLVARGPKSLDVLRFVYGLGDRATTVLGNHDLNLLAVDAGYSQAKKKDKTENILTAPDRHELMTWLRTQPIMAEHPTLPVMMTHAGLSPQWDLATARHCAREVEMLLRSDQGNWLLGHMYGEEPSHWDARLTGLPRWRYIINSFTRMRFCRNDGSLEFKCKEAPSDKPALLAPWFEVRQAAPDEPHLVFGHWAALMGKCPLPTIKALDTGCVWGNQLTLWRWDDNAMFSLNCPAYASGGE.

It belongs to the Ap4A hydrolase family.

It catalyses the reaction P(1),P(4)-bis(5'-adenosyl) tetraphosphate + H2O = 2 ADP + 2 H(+). Hydrolyzes diadenosine 5',5'''-P1,P4-tetraphosphate to yield ADP. The polypeptide is Bis(5'-nucleosyl)-tetraphosphatase, symmetrical (Tolumonas auensis (strain DSM 9187 / NBRC 110442 / TA 4)).